The following is a 67-amino-acid chain: Major cold shock protein (67 aa).

The CSD domain occupies 4 to 63 (GTVKWFNAEKGFGFISTENGQDVFAHFSAIQTSGFKTLEEGQKVAFDVEEGQRGPQAVNI).

In terms of assembly, homodimer.

It localises to the cytoplasm. This is Major cold shock protein (cspA) from Streptococcus pyogenes serotype M6 (strain ATCC BAA-946 / MGAS10394).